Reading from the N-terminus, the 247-residue chain is Trypsin-2 (247 aa).

Positions 1–15 (MNLLLILTFVAAAVA) are cleaved as a signal peptide. The propeptide at 16-23 (APFDDDDK) is activation peptide. Positions 24–244 (IVGGYICEEN…YVDWIKDTIA (221 aa)) constitute a Peptidase S1 domain. 4 disulfides stabilise this stretch: C30/C160, C48/C64, C171/C185, and C196/C220. H63 acts as the Charge relay system in catalysis. Ca(2+) contacts are provided by E75, N77, V80, and E85. Catalysis depends on D107, which acts as the Charge relay system. The residue at position 154 (Y154) is a Sulfotyrosine. S200 (charge relay system) is an active-site residue.

Belongs to the peptidase S1 family. Ca(2+) serves as cofactor. Sulfated on tyrosine. Post-translationally, sulfation at Tyr-154 increases selectivity towards basic versus apolar residues at the P2' position of inhibitors that bind in a substrate-like fashion. Although the increase in selectivity is relatively small, it may facilitate digestion of a broader range of dietary proteins. As to expression, expressed in Paneth cells, at the base of small intestinal crypts.

Its subcellular location is the secreted. It is found in the extracellular space. The catalysed reaction is Preferential cleavage: Arg-|-Xaa, Lys-|-Xaa.. In the ileum, may be involved in defensin processing, including DEFA5. The chain is Trypsin-2 (PRSS2) from Homo sapiens (Human).